Consider the following 342-residue polypeptide: Transmembrane protein HWLF3 (342 aa).

The segment at 21–64 (PCSTSCPPSPAAPTLLRRRSLPQQRRRPSSSPNRRVRGVTTSPC) is disordered. Residues 36–48 (LRRRSLPQQRRRP) are compositionally biased toward basic residues. The chain crosses the membrane as a helical span at residues 119–139 (AIFIFQLAFSFGLGSVFWLGF). A glycan (N-linked (GlcNAc...) asparagine; by host) is linked at N149. The helical transmembrane segment at 150 to 170 (YSFFLTVLVPIVCMFITYTLG) threads the bilayer. N176 carries an N-linked (GlcNAc...) asparagine; by host glycan. The next 5 membrane-spanning stretches (helical) occupy residues 177-197 (ATVL…FQMC), 202-222 (VLVG…GLAF), 231-251 (WKCI…LALL), 266-286 (AFSI…VIFF), and 296-316 (AVCL…MLSG). A glycan (N-linked (GlcNAc...) asparagine; by host) is linked at N330.

The protein belongs to the cytomegalovirus US12 family.

Its subcellular location is the membrane. This chain is Transmembrane protein HWLF3 (US20), found in Homo sapiens (Human).